We begin with the raw amino-acid sequence, 150 residues long: Large ribosomal subunit protein bL9 (150 aa).

This sequence belongs to the bacterial ribosomal protein bL9 family.

In terms of biological role, binds to the 23S rRNA. This is Large ribosomal subunit protein bL9 from Baumannia cicadellinicola subsp. Homalodisca coagulata.